We begin with the raw amino-acid sequence, 130 residues long: Fluoride-specific ion channel FluC (130 aa).

Helical transmembrane passes span 3–23 (FVFLWAALGGAIGSSLRYFVG), 38–58 (LGTFSVNLIGCFVIGFMGHLA), 67–87 (FGIFFVTGVLGGFTTFSSYGL), and 102–122 (VSYVLGTNLLGLIGVAIGWFL). Na(+)-binding residues include glycine 77 and threonine 80.

Belongs to the fluoride channel Fluc/FEX (TC 1.A.43) family.

Its subcellular location is the cell inner membrane. The enzyme catalyses fluoride(in) = fluoride(out). Its activity is regulated as follows. Na(+) is not transported, but it plays an essential structural role and its presence is essential for fluoride channel function. Fluoride-specific ion channel. Important for reducing fluoride concentration in the cell, thus reducing its toxicity. The sequence is that of Fluoride-specific ion channel FluC from Helicobacter pylori (strain HPAG1).